A 153-amino-acid polypeptide reads, in one-letter code: Facilitator of iron transport 2 (153 aa).

The signal sequence occupies residues 1-18 (MKFSTIFGATTVMTAVSA). The segment at 73–98 (TEGPDTTSEKSTTKTLTLTNGSGSST) is disordered. Residues 85–98 (TKTLTLTNGSGSST) show a composition bias toward low complexity. N-linked (GlcNAc...) asparagine glycosylation is present at Asn-92. Residue Gly-130 is the site of GPI-anchor amidated glycine attachment. A propeptide spans 131–153 (AAPAAFQGASVGALALGLISYLL) (removed in mature form).

In terms of processing, the GPI-anchor is attached to the protein in the endoplasmic reticulum and serves to target the protein to the cell surface. There, the glucosamine-inositol phospholipid moiety is cleaved off and the GPI-modified mannoprotein is covalently attached via its lipidless GPI glycan remnant to the 1,6-beta-glucan of the outer cell wall layer.

Its subcellular location is the secreted. The protein resides in the cell wall. It localises to the membrane. In terms of biological role, involved in the uptake of non-siderophore and siderophore sources of iron. Has a role in the retention of iron in the cell wall and periplasmic space. The sequence is that of Facilitator of iron transport 2 (FIT2) from Saccharomyces cerevisiae (strain ATCC 204508 / S288c) (Baker's yeast).